Consider the following 78-residue polypeptide: Short neurotoxin SNTX11 (78 aa).

A signal peptide spans 1–21 (MKTLLLTFLVVTIVCLDLGYT). 4 cysteine pairs are disulfide-bonded: cysteine 24–cysteine 40, cysteine 33–cysteine 58, cysteine 62–cysteine 70, and cysteine 71–cysteine 76.

The protein belongs to the three-finger toxin family. Short-chain subfamily. As to expression, expressed by the venom gland.

The protein resides in the secreted. Its function is as follows. This three-finger toxin binds and inhibits the nicotinic acetylcholine receptor (nAChR). This is Short neurotoxin SNTX11 from Ophiophagus hannah (King cobra).